Consider the following 1070-residue polypeptide: Probable arabinosyltransferase C (1070 aa).

A run of 12 helical transmembrane segments spans residues 10–32, 210–232, 247–269, 399–421, 425–442, 449–471, 512–534, 547–564, 574–596, 603–625, 645–664, and 685–707; these read IARLLAVIAGLLGALLAMATPFL, LLKTIAMILGVVLTIVALVALHL, SRWWSIGCLDGLVITILAWWHFV, VATSRLLPVAVACIVGALTLFSG, IASIGALLVAVGPLLTIL, FGAVPLVAPILAASTVTAILIFR, SVARRFAVLALLVALSVAVAMSL, SRRIIGITVTSFLAMMFT, VFAGLAGSLGALAAVAVASAALR, VFAAVVLFVVALSFASVNGWWYV, TALLELTVIVLLLAAWFHFV, and SPIAIATWSLVIFEVASLTMAMI.

This sequence belongs to the emb family.

It localises to the cell membrane. Arabinosyl transferase responsible for the polymerization of arabinose into the arabinan of arabinogalactan. The chain is Probable arabinosyltransferase C (embC) from Mycobacterium leprae (strain TN).